The following is a 249-amino-acid chain: Pyridoxine 5'-phosphate synthase (249 aa).

Residue N7 participates in 3-amino-2-oxopropyl phosphate binding. 9–10 lines the 1-deoxy-D-xylulose 5-phosphate pocket; sequence DH. R18 contributes to the 3-amino-2-oxopropyl phosphate binding site. The Proton acceptor role is filled by H43. Positions 45 and 50 each coordinate 1-deoxy-D-xylulose 5-phosphate. E70 functions as the Proton acceptor in the catalytic mechanism. T100 contributes to the 1-deoxy-D-xylulose 5-phosphate binding site. Catalysis depends on H190, which acts as the Proton donor. 3-amino-2-oxopropyl phosphate contacts are provided by residues G191 and 212 to 213; that span reads GH.

This sequence belongs to the PNP synthase family. In terms of assembly, homooctamer; tetramer of dimers.

It is found in the cytoplasm. It carries out the reaction 3-amino-2-oxopropyl phosphate + 1-deoxy-D-xylulose 5-phosphate = pyridoxine 5'-phosphate + phosphate + 2 H2O + H(+). Its pathway is cofactor biosynthesis; pyridoxine 5'-phosphate biosynthesis; pyridoxine 5'-phosphate from D-erythrose 4-phosphate: step 5/5. Functionally, catalyzes the complicated ring closure reaction between the two acyclic compounds 1-deoxy-D-xylulose-5-phosphate (DXP) and 3-amino-2-oxopropyl phosphate (1-amino-acetone-3-phosphate or AAP) to form pyridoxine 5'-phosphate (PNP) and inorganic phosphate. The polypeptide is Pyridoxine 5'-phosphate synthase (Synechococcus sp. (strain CC9902)).